The chain runs to 191 residues: Thymidylate kinase (191 aa).

Residue 7–14 participates in ATP binding; it reads GVDGAGKS.

The protein belongs to the thymidylate kinase family.

It catalyses the reaction dTMP + ATP = dTDP + ADP. Phosphorylation of dTMP to form dTDP in both de novo and salvage pathways of dTTP synthesis. The protein is Thymidylate kinase (tmk) of Helicobacter pylori (strain ATCC 700392 / 26695) (Campylobacter pylori).